The chain runs to 365 residues: Selina-4(15),7(11)-diene synthase ((2E,6E)-farnesyl diphosphate cyclizing) (365 aa).

The Mg(2+) site is built by Asp82 and Glu87. A DDXXXE motif motif is present at residues 82–87; that stretch reads DDGHCE. Arg178 contacts substrate. Mg(2+) contacts are provided by Asn224 and Ser228. Substrate is bound at residue Lys231. Residue Glu232 coordinates Mg(2+). Position 310-311 (310-311) interacts with substrate; it reads RY.

Belongs to the terpene synthase family. Monomer. The cofactor is Mg(2+).

It catalyses the reaction (2E,6E)-farnesyl diphosphate = selina-4(15),7(11)-diene + diphosphate. It participates in secondary metabolite biosynthesis; terpenoid biosynthesis. Catalyzes the conversion of (2E,6E)-farnesyl diphosphate (FPP) to yield the bicyclic sesquiterpene selina-4(15),7(11)-diene via a 1,10-cyclization, which requires the abstraction of the pyrophosphate from FPP leading to a (E,E)-germacradienyl cation. The only accepted substrate is (2E,6E)-farnesyl diphosphate (FPP). In Streptomyces pristinaespiralis (strain ATCC 25486 / DSM 40338 / CBS 914.69 / JCM 4507 / KCC S-0507 / NBRC 13074 / NRRL 2958 / 5647), this protein is Selina-4(15),7(11)-diene synthase ((2E,6E)-farnesyl diphosphate cyclizing).